A 288-amino-acid chain; its full sequence is Shikimate dehydrogenase (NADP(+)) (288 aa).

Shikimate-binding positions include 14–16 (SIS) and Thr-63. The Proton acceptor role is filled by Lys-67. Glu-79 provides a ligand contact to NADP(+). Residues Asn-88 and Asp-103 each contribute to the shikimate site. Residues 127-131 (GSGGA), 151-156 (NRTYEK), and Met-219 each bind NADP(+). Tyr-221 serves as a coordination point for shikimate. Residue Gly-242 coordinates NADP(+).

Belongs to the shikimate dehydrogenase family. Homodimer.

The enzyme catalyses shikimate + NADP(+) = 3-dehydroshikimate + NADPH + H(+). Its pathway is metabolic intermediate biosynthesis; chorismate biosynthesis; chorismate from D-erythrose 4-phosphate and phosphoenolpyruvate: step 4/7. Its function is as follows. Involved in the biosynthesis of the chorismate, which leads to the biosynthesis of aromatic amino acids. Catalyzes the reversible NADPH linked reduction of 3-dehydroshikimate (DHSA) to yield shikimate (SA). This is Shikimate dehydrogenase (NADP(+)) from Caldicellulosiruptor bescii (strain ATCC BAA-1888 / DSM 6725 / KCTC 15123 / Z-1320) (Anaerocellum thermophilum).